A 622-amino-acid polypeptide reads, in one-letter code: 1-deoxy-D-xylulose-5-phosphate synthase (622 aa).

Thiamine diphosphate is bound by residues His71 and 112-114 (GHS). Asp143 contacts Mg(2+). Thiamine diphosphate contacts are provided by residues 144 to 145 (GA), Asn172, Tyr283, and Glu363. Asn172 contributes to the Mg(2+) binding site.

This sequence belongs to the transketolase family. DXPS subfamily. As to quaternary structure, homodimer. Requires Mg(2+) as cofactor. Thiamine diphosphate serves as cofactor.

The catalysed reaction is D-glyceraldehyde 3-phosphate + pyruvate + H(+) = 1-deoxy-D-xylulose 5-phosphate + CO2. The protein operates within metabolic intermediate biosynthesis; 1-deoxy-D-xylulose 5-phosphate biosynthesis; 1-deoxy-D-xylulose 5-phosphate from D-glyceraldehyde 3-phosphate and pyruvate: step 1/1. In terms of biological role, catalyzes the acyloin condensation reaction between C atoms 2 and 3 of pyruvate and glyceraldehyde 3-phosphate to yield 1-deoxy-D-xylulose-5-phosphate (DXP). This is 1-deoxy-D-xylulose-5-phosphate synthase from Caldanaerobacter subterraneus subsp. tengcongensis (strain DSM 15242 / JCM 11007 / NBRC 100824 / MB4) (Thermoanaerobacter tengcongensis).